We begin with the raw amino-acid sequence, 92 residues long: UPF0473 protein Cbei_1107 (92 aa).

Belongs to the UPF0473 family.

This is UPF0473 protein Cbei_1107 from Clostridium beijerinckii (strain ATCC 51743 / NCIMB 8052) (Clostridium acetobutylicum).